Reading from the N-terminus, the 297-residue chain is Ribosomal RNA small subunit methyltransferase H (297 aa).

S-adenosyl-L-methionine-binding positions include 36 to 38 (GGH), D56, L90, D104, and H111.

Belongs to the methyltransferase superfamily. RsmH family.

It is found in the cytoplasm. It catalyses the reaction cytidine(1402) in 16S rRNA + S-adenosyl-L-methionine = N(4)-methylcytidine(1402) in 16S rRNA + S-adenosyl-L-homocysteine + H(+). Specifically methylates the N4 position of cytidine in position 1402 (C1402) of 16S rRNA. In Dictyoglomus thermophilum (strain ATCC 35947 / DSM 3960 / H-6-12), this protein is Ribosomal RNA small subunit methyltransferase H.